A 937-amino-acid polypeptide reads, in one-letter code: Vacuolar membrane protease (937 aa).

Residues 1–16 (PNGFVKFIRSIFGYRK) are Cytoplasmic-facing. Residues 17–37 (TSLTLFVILTYVAVLLLAYLD) traverse the membrane as a helical segment. At 38–373 (HSLYYSVDLP…FPTSQVVVAS (336 aa)) the chain is on the vacuolar side. N106 and N140 each carry an N-linked (GlcNAc...) asparagine glycan. Zn(2+) contacts are provided by H154 and D166. Residue E201 is the Proton acceptor of the active site. Residues E202, E227, and H300 each contribute to the Zn(2+) site. The helical transmembrane segment at 374-394 (ILLLVLIPGISIPFLIIIFGY) threads the bilayer. Over 395-407 (KKNWELSFVNVTK) the chain is Cytoplasmic. The chain crosses the membrane as a helical span at residues 408–428 (FPISLAISAALLNLFTNGFIV). The Vacuolar segment spans residues 429 to 437 (PFNQFLPNS). Residues 438 to 458 (SPFALVAILFATFLLLNYLIL) traverse the membrane as a helical segment. Residues 459 to 475 (NGINLIFVSYKIVNHDE) are Cytoplasmic-facing. A helical membrane pass occupies residues 476–496 (KLISIIETSFLYWVVLIYSTA). Residues 497 to 510 (KLANNVIGDDHSGE) lie on the Vacuolar side of the membrane. A helical transmembrane segment spans residues 511–531 (FPIIFLCALQAVASIFGLIGW). Over 532–580 (SFKPVPKEHYVVVPQEEAEPLLGSSDNFNYGSPDVEDDRLVSDGSYDWS) the chain is Cytoplasmic. Residues 581 to 601 (IQFLTIVPISTYLIYNSGFLV) form a helical membrane-spanning segment. Residues 602–618 (VDGINKSIQESLISQNL) are Vacuolar-facing. N606 carries an N-linked (GlcNAc...) asparagine glycan. A helical membrane pass occupies residues 619–639 (IYKLLQTFAISLSIPLLPFIF). Residues 640–643 (KVNR) are Cytoplasmic-facing. A helical membrane pass occupies residues 644–664 (LFVLALFLISTIGVLFVATAD). Over 665–937 (SFNVANPLKL…LVSVSKTVEL (273 aa)) the chain is Vacuolar. 3 N-linked (GlcNAc...) asparagine glycosylation sites follow: N758, N870, and N887.

Belongs to the peptidase M28 family. The cofactor is Zn(2+).

The protein resides in the vacuole membrane. May be involved in vacuolar sorting and osmoregulation. The sequence is that of Vacuolar membrane protease from Scheffersomyces stipitis (strain ATCC 58785 / CBS 6054 / NBRC 10063 / NRRL Y-11545) (Yeast).